Reading from the N-terminus, the 593-residue chain is Gamma-humulene synthase (593 aa).

The span at 1-26 (MAQISESVSPSTDLKSTESSITSNRH) shows a compositional bias: polar residues. The tract at residues 1 to 34 (MAQISESVSPSTDLKSTESSITSNRHGNMWEDDR) is disordered. Residues Asp-343, Asp-347, Asp-488, and Glu-496 each contribute to the Mg(2+) site. Positions 343-347 (DDLYD) match the DDXXD motif motif.

The protein belongs to the terpene synthase family. Tpsd subfamily. It depends on Mg(2+) as a cofactor. Requires K(+) as cofactor.

The protein localises to the cytoplasm. It catalyses the reaction (2E,6E)-farnesyl diphosphate = gamma-humulene + diphosphate. It carries out the reaction (2E,6E)-farnesyl diphosphate = sibirene + diphosphate. The enzyme catalyses (2E,6E)-farnesyl diphosphate = longifolene + diphosphate. The catalysed reaction is (2E,6E)-farnesyl diphosphate = beta-himachalene + diphosphate. It catalyses the reaction (2E,6E)-farnesyl diphosphate = gamma-himachalene + diphosphate. It carries out the reaction (2E,6E)-farnesyl diphosphate = alpha-himachalene + diphosphate. Its pathway is terpene metabolism; oleoresin biosynthesis. In terms of biological role, involved in defensive oleoresin formation in conifers in response to insect attack or other injury. Involved in 52 sesquiterpene (C15) olefins biosynthesis. The chain is Gamma-humulene synthase (ag5) from Abies grandis (Grand fir).